Here is a 146-residue protein sequence, read N- to C-terminus: Transcriptional regulator MraZ (146 aa).

2 SpoVT-AbrB domains span residues 5-48 (TSYH…TLEE) and 77-120 (ASEC…SRAK).

Belongs to the MraZ family. In terms of assembly, forms oligomers.

Its subcellular location is the cytoplasm. The protein resides in the nucleoid. The polypeptide is Transcriptional regulator MraZ (Desulfosudis oleivorans (strain DSM 6200 / JCM 39069 / Hxd3) (Desulfococcus oleovorans)).